The sequence spans 332 residues: Glyceraldehyde-3-phosphate dehydrogenase (332 aa).

Residues 10 to 11 (RI), D36, K81, and S116 each bind NAD(+). Residues 150 to 152 (SCT), T181, R197, 210 to 211 (TK), and R233 each bind D-glyceraldehyde 3-phosphate. Residue C151 is the Nucleophile of the active site. N314 contacts NAD(+).

The protein belongs to the glyceraldehyde-3-phosphate dehydrogenase family. Homotetramer.

Its subcellular location is the cytoplasm. The catalysed reaction is D-glyceraldehyde 3-phosphate + phosphate + NAD(+) = (2R)-3-phospho-glyceroyl phosphate + NADH + H(+). The protein operates within carbohydrate degradation; glycolysis; pyruvate from D-glyceraldehyde 3-phosphate: step 1/5. Catalyzes the oxidative phosphorylation of glyceraldehyde 3-phosphate (G3P) to 1,3-bisphosphoglycerate (BPG) using the cofactor NAD. The first reaction step involves the formation of a hemiacetal intermediate between G3P and a cysteine residue, and this hemiacetal intermediate is then oxidized to a thioester, with concomitant reduction of NAD to NADH. The reduced NADH is then exchanged with the second NAD, and the thioester is attacked by a nucleophilic inorganic phosphate to produce BPG. The sequence is that of Glyceraldehyde-3-phosphate dehydrogenase (gapA) from Helicobacter pylori (strain J99 / ATCC 700824) (Campylobacter pylori J99).